Consider the following 347-residue polypeptide: MNDLDTLVSAAQADFAAATTPAQLEDAKARFLGKTGRVTELLKGMAALTPDEKKTRGASINETKQRIEAALTARRQALAEAELQAQLKAEALDVTLPGRQRGVGGLHPVSRTLERIEQIFGSMGFDVADGPEIETDWYSFTALNNPENHPARSMQDTFYVDMNDEAGRPLCLRPHTSPMQVRYARQHAALHAGKDTLPEIRVIAPGRTYRVDSDATHSPMFHQCEGLWIGENVSFKDLKSVFTDFFRTFFETDDLELRFRPSFFPFTEPSAEVDIAFASGPLKGRWLEVAGSGQVHPNVVRNFGLDPERYIGFAFGMGPDRLTMLRYGVNDLRLFFEGDLRFLSQFK.

E268 contacts Mg(2+).

It belongs to the class-II aminoacyl-tRNA synthetase family. Phe-tRNA synthetase alpha subunit type 1 subfamily. As to quaternary structure, tetramer of two alpha and two beta subunits. Mg(2+) is required as a cofactor.

The protein resides in the cytoplasm. The enzyme catalyses tRNA(Phe) + L-phenylalanine + ATP = L-phenylalanyl-tRNA(Phe) + AMP + diphosphate + H(+). The polypeptide is Phenylalanine--tRNA ligase alpha subunit (Leptothrix cholodnii (strain ATCC 51168 / LMG 8142 / SP-6) (Leptothrix discophora (strain SP-6))).